An 82-amino-acid chain; its full sequence is Small ribosomal subunit protein uS17c (82 aa).

Belongs to the universal ribosomal protein uS17 family. In terms of assembly, part of the 30S ribosomal subunit.

Its subcellular location is the plastid. It is found in the chloroplast. In terms of biological role, one of the primary rRNA binding proteins, it binds specifically to the 5'-end of 16S ribosomal RNA. The chain is Small ribosomal subunit protein uS17c (rps17) from Emiliania huxleyi (Coccolithophore).